A 92-amino-acid chain; its full sequence is uncharacterized protein (92 aa).

In terms of biological role, homolog of shope fibroma virus T4A ORF. This is an uncharacterized protein from Swinepox virus (strain Kasza) (SWPV).